Consider the following 389-residue polypeptide: Rhizopuspepsin-1 (389 aa).

The signal sequence occupies residues 1 to 21 (MKFTLISSCVALAAMTLAVEA). Residues 22-66 (APNGKKINIPLAKNNSYKPSAKNALNKALAKYNRRKVGSGGITTE) constitute a propeptide, activation peptide. Residues 82-385 (YYGEVTVGTP…NQEVPEVQIA (304 aa)) enclose the Peptidase A1 domain. Aspartate 100 is an active-site residue. Residues cysteine 113 and cysteine 116 are joined by a disulfide bond. Aspartate 283 is a catalytic residue. A disulfide bridge links cysteine 317 with cysteine 350.

This sequence belongs to the peptidase A1 family.

The catalysed reaction is Hydrolysis of proteins with broad specificity similar to that of pepsin A, preferring hydrophobic residues at P1 and P1'. Clots milk and activates trypsinogen. Does not cleave 4-Gln-|-His-5, but does cleave 10-His-|-Leu-11 and 12-Val-|-Glu-13 in B chain of insulin.. The sequence is that of Rhizopuspepsin-1 (RNAP) from Rhizopus niveus.